We begin with the raw amino-acid sequence, 1055 residues long: MKAMEERTVGLISASSSRASLKTQLENGYPRICDYCEPTIEFLSSSELARHIRQDHTTQEGGSFLCRYGEHGVCQKLPLEGVCDVDFEAHIRRCHTSQSVPYSRSTSCFTEDNEEAASLRSIRLTSDRDTPTIEKKKFTLHSFTQNLSAVLADPSRSRNDLSTFFTRHWGDTFVPTQPVPTSKRLAKMADASFDSYCQAAGESYKRYQAVKRALRLSHTEGTESGNERQDAEDLPTVFIDPRFTLGDSSTFSAVFTVPANENLDALKQTLSGKNVIPATPLEVAINKKPGEFRDYEALQNRLEMMHDVVDGRLAGKLVAKTDDFWQVVRSYSGLQEQLANALQCVMVVRKNLKHVDELVCDQTKKIIEVHQKYEQKKHLLAKLNDIACLREAQSTVQMMLSQGDYPKAIECIETSLDVLSKELNGVTCFRHLSSQLRELYSVIGRMMNEDFTSLIQKEFGVKPEAGTLIQAEGELSAVLLGLMRMRKYTFISVLREEIIEGVKSVMRHVIKSQILNSGVDLSDFDPSLTQLGEPVRRMKHADFLKTVRAVMDEEYFFCKRLEALQDILLETAQRAHPSNRHGSEDIIIERLEEAKLNESDSDDETGSFSKSTSSGGFVSGSAVNSNATATTLLSIEVRSEAFLKRVLPLIAEFGHQCAQQRISRLLIARAKNASVTEATTPTQLSECIAIVKEYQSQCEEEGWYSTQNQKAGGLGRAINKLSMDYIEKFHAARKMRIGNMLDTELWKATDVSIIDQNMVDQAIETGMLRSSKRIDDGPTKKPFKRTGSSATIDSGTSVSNQTGIIVDEESFVVVGSSITMIQILADYCEAISKMPTFAQDWNSRVIELLKTFNSRCCQLILGAGALQLVGLKTISVRNLGTIFVNLTLAGRSLELVCRFIPMVHDEMDRVLPDDRKSLLRYFKGVESEYRDHVNEIAIKLISVIAHYTTNCLGMWDVKGNIPSPEFQQICRHMLKFHNGLTGIMPRDQIESLFRQVHENFKANLREHVTGMGIRPHDTLKYGYVTQDYMYYQQNVKNMESCRNLELESLNDIMFD.

Residues 363 to 383 are a coiled coil; the sequence is TKKIIEVHQKYEQKKHLLAKL. Positions 774 to 794 are disordered; it reads IDDGPTKKPFKRTGSSATIDS.

It belongs to the VPS54 family. In terms of assembly, component of the Golgi-associated retrograde protein (GARP) complex, also called VFT (VPS fifty-three) complex, composed of VPS51, VPS52, VPS53 and VPS54.

The protein localises to the golgi apparatus. Its subcellular location is the trans-Golgi network. Its function is as follows. Acts as a component of the GARP complex that is involved in retrograde transport from early and late endosomes to the trans-Golgi network (TGN). The GARP complex facilitates tethering as well as SNARE complex assembly at the Golgi. The chain is Vacuolar protein sorting-associated protein 54 (vps-54) from Caenorhabditis briggsae.